The sequence spans 317 residues: Tyrosine--tRNA ligase (317 aa).

Y33 is an L-tyrosine binding site. Residues 38–46 (PSGKIHMGH) carry the 'HIGH' region motif. L-tyrosine contacts are provided by Y155, Q159, D162, and Q177. The 'KMSKS' region motif lies at 211-215 (KMASS). An ATP-binding site is contributed by S214.

This sequence belongs to the class-I aminoacyl-tRNA synthetase family. TyrS type 3 subfamily. Homodimer.

The protein resides in the cytoplasm. It catalyses the reaction tRNA(Tyr) + L-tyrosine + ATP = L-tyrosyl-tRNA(Tyr) + AMP + diphosphate + H(+). Functionally, catalyzes the attachment of tyrosine to tRNA(Tyr) in a two-step reaction: tyrosine is first activated by ATP to form Tyr-AMP and then transferred to the acceptor end of tRNA(Tyr). The protein is Tyrosine--tRNA ligase of Methanosarcina barkeri (strain Fusaro / DSM 804).